The sequence spans 244 residues: Transcriptional regulatory protein AruR (244 aa).

Residues 6–124 form the Response regulatory domain; it reads RVLVVDDDPV…ELVSRAKNLI (119 aa). Asp-60 carries the post-translational modification 4-aspartylphosphate. The ompR/PhoB-type DNA-binding region spans 139–239; sequence QALRQFGDWL…IHGAGYLFTA (101 aa).

Phosphorylated by AruS.

The protein resides in the cytoplasm. The protein operates within amino-acid degradation; L-arginine degradation [regulation]. In terms of biological role, member of the two-component regulatory system AruS/AruR, which is involved in the regulation of the arginine transaminase (ATA) pathway in response to exogeneous L-arginine. Regulates transcription of aruH and aruI. This Pseudomonas aeruginosa (strain ATCC 15692 / DSM 22644 / CIP 104116 / JCM 14847 / LMG 12228 / 1C / PRS 101 / PAO1) protein is Transcriptional regulatory protein AruR (aruR).